We begin with the raw amino-acid sequence, 599 residues long: Translation initiation factor IF-2 (599 aa).

A tr-type G domain is found at 111 to 278 (PRPPIITVMG…SILLLAEILE (168 aa)). The segment at 120–127 (GHVDHGKT) is G1. Position 120–127 (120–127 (GHVDHGKT)) interacts with GTP. Positions 145–149 (GITQH) are G2. The segment at 166-169 (DTPG) is G3. GTP is bound by residues 166-170 (DTPGH) and 220-223 (NKMD). The interval 220-223 (NKMD) is G4. The segment at 256–258 (SAL) is G5.

Belongs to the TRAFAC class translation factor GTPase superfamily. Classic translation factor GTPase family. IF-2 subfamily.

It localises to the cytoplasm. One of the essential components for the initiation of protein synthesis. Protects formylmethionyl-tRNA from spontaneous hydrolysis and promotes its binding to the 30S ribosomal subunits. Also involved in the hydrolysis of GTP during the formation of the 70S ribosomal complex. The chain is Translation initiation factor IF-2 from Mesomycoplasma hyopneumoniae (strain 232) (Mycoplasma hyopneumoniae).